The sequence spans 316 residues: Putative transketolase C-terminal section (316 aa).

The protein belongs to the transketolase family. Thiamine diphosphate is required as a cofactor.

It catalyses the reaction D-sedoheptulose 7-phosphate + D-glyceraldehyde 3-phosphate = aldehydo-D-ribose 5-phosphate + D-xylulose 5-phosphate. The sequence is that of Putative transketolase C-terminal section from Methanocaldococcus jannaschii (strain ATCC 43067 / DSM 2661 / JAL-1 / JCM 10045 / NBRC 100440) (Methanococcus jannaschii).